The chain runs to 87 residues: Small ribosomal subunit protein uS19 (87 aa).

This sequence belongs to the universal ribosomal protein uS19 family.

In terms of biological role, protein S19 forms a complex with S13 that binds strongly to the 16S ribosomal RNA. This is Small ribosomal subunit protein uS19 from Mesoplasma florum (strain ATCC 33453 / NBRC 100688 / NCTC 11704 / L1) (Acholeplasma florum).